Here is a 375-residue protein sequence, read N- to C-terminus: Delta(12) fatty acid dehydrogenase (375 aa).

2 consecutive transmembrane segments (helical) span residues 54 to 74 (IIAY…PAPL) and 77 to 97 (LAWP…WVIG). Residues 98–102 (HECGH) carry the Histidine box-1 motif. The helical transmembrane segment at 110-130 (WVDDTVGFILHSFLMTPYFSW) threads the bilayer. Residues 134–138 (HRNHH) carry the Histidine box-2 motif. The next 3 membrane-spanning stretches (helical) occupy residues 172-192 (LLIM…TNIS), 218-238 (VLLS…AVAA), and 242-262 (AWVT…FDII). The Histidine box-3 signature appears at 308 to 312 (HVMHH).

Belongs to the fatty acid desaturase type 1 family. Requires Fe cation as cofactor. As to expression, seed.

The protein resides in the membrane. It catalyses the reaction a (9Z,12Z)-octadecadienoyl-containing glycerolipid + 2 Fe(II)-[cytochrome b5] + O2 + 2 H(+) = a (9Z)-octadec-9-en-12-ynoyl-containing glycerolipid + 2 Fe(III)-[cytochrome b5] + 2 H2O. It functions in the pathway lipid metabolism; polyunsaturated fatty acid biosynthesis. Its function is as follows. Changes the delta-12 double bond of linoleic acid into a triple bond in the biosynthesis of crepenynic acid. The chain is Delta(12) fatty acid dehydrogenase from Crepis alpina (Hawksbeard).